Reading from the N-terminus, the 118-residue chain is Phosphoribosyl-AMP cyclohydrolase (118 aa).

Position 85 (Asp85) interacts with Mg(2+). Cys86 contributes to the Zn(2+) binding site. Residues Asp87 and Asp89 each coordinate Mg(2+). Zn(2+) is bound by residues Cys102 and Cys109.

The protein belongs to the PRA-CH family. Homodimer. It depends on Mg(2+) as a cofactor. The cofactor is Zn(2+).

The protein localises to the cytoplasm. It carries out the reaction 1-(5-phospho-beta-D-ribosyl)-5'-AMP + H2O = 1-(5-phospho-beta-D-ribosyl)-5-[(5-phospho-beta-D-ribosylamino)methylideneamino]imidazole-4-carboxamide. The protein operates within amino-acid biosynthesis; L-histidine biosynthesis; L-histidine from 5-phospho-alpha-D-ribose 1-diphosphate: step 3/9. Functionally, catalyzes the hydrolysis of the adenine ring of phosphoribosyl-AMP. The sequence is that of Phosphoribosyl-AMP cyclohydrolase from Sulfurisphaera tokodaii (strain DSM 16993 / JCM 10545 / NBRC 100140 / 7) (Sulfolobus tokodaii).